Reading from the N-terminus, the 128-residue chain is Small ribosomal subunit protein uS9 (128 aa).

Part of the 30S ribosomal subunit. Contacts proteins S7 and S10.

In terms of biological role, part of the top of the head of the 30S subunit. The C-terminal region penetrates the head emerging in the P-site where it contacts tRNA. The sequence is that of Small ribosomal subunit protein uS9 (rpsI) from Thermus thermophilus (strain ATCC 27634 / DSM 579 / HB8).